The sequence spans 266 residues: Probable carboxylesterase Os04g0669500 (266 aa).

Catalysis depends on charge relay system residues Ser154, Asp208, and His240.

The protein belongs to the AB hydrolase superfamily. AB hydrolase 2 family.

Functionally, possesses carboxylesterase activity in vitro. This Oryza sativa subsp. japonica (Rice) protein is Probable carboxylesterase Os04g0669500.